A 169-amino-acid polypeptide reads, in one-letter code: Ribosome maturation factor RimM (169 aa).

Positions 97–169 constitute a PRC barrel domain; sequence EDEYYWTDLV…IITADWGLDY (73 aa).

This sequence belongs to the RimM family. As to quaternary structure, binds ribosomal protein uS19.

Its subcellular location is the cytoplasm. An accessory protein needed during the final step in the assembly of 30S ribosomal subunit, possibly for assembly of the head region. Essential for efficient processing of 16S rRNA. May be needed both before and after RbfA during the maturation of 16S rRNA. It has affinity for free ribosomal 30S subunits but not for 70S ribosomes. This is Ribosome maturation factor RimM from Neisseria meningitidis serogroup C / serotype 2a (strain ATCC 700532 / DSM 15464 / FAM18).